Consider the following 194-residue polypeptide: Accessory gene regulator protein B (194 aa).

5 helical membrane-spanning segments follow: residues 44–64, 80–100, 107–127, 142–162, and 163–183; these read IVVY…LTHL, SSLL…YLII, FVLL…APAA, KILS…TKEP, and VNKL…PIFF.

It belongs to the AgrB family.

It is found in the cell membrane. Its function is as follows. Essential for the production of a quorum sensing system signal molecule, the autoinducing peptide (AIP). This quorum sensing system is responsible for the regulation of the expression of virulence factor genes. Involved in the proteolytic processing of AgrD, the precursor of AIP. This chain is Accessory gene regulator protein B, found in Staphylococcus epidermidis.